The sequence spans 160 residues: 2-C-methyl-D-erythritol 2,4-cyclodiphosphate synthase (160 aa).

Positions 9 and 11 each coordinate a divalent metal cation. 4-CDP-2-C-methyl-D-erythritol 2-phosphate contacts are provided by residues 9–11 (DVH) and 35–36 (HS). His-43 provides a ligand contact to a divalent metal cation. 4-CDP-2-C-methyl-D-erythritol 2-phosphate-binding positions include 57 to 59 (DIG), 62 to 66 (FPDTD), 101 to 107 (AQKPKMA), 133 to 136 (TTTE), Phe-140, and Arg-143.

Belongs to the IspF family. As to quaternary structure, homotrimer. The cofactor is a divalent metal cation.

The enzyme catalyses 4-CDP-2-C-methyl-D-erythritol 2-phosphate = 2-C-methyl-D-erythritol 2,4-cyclic diphosphate + CMP. It participates in isoprenoid biosynthesis; isopentenyl diphosphate biosynthesis via DXP pathway; isopentenyl diphosphate from 1-deoxy-D-xylulose 5-phosphate: step 4/6. In terms of biological role, involved in the biosynthesis of isopentenyl diphosphate (IPP) and dimethylallyl diphosphate (DMAPP), two major building blocks of isoprenoid compounds. Catalyzes the conversion of 4-diphosphocytidyl-2-C-methyl-D-erythritol 2-phosphate (CDP-ME2P) to 2-C-methyl-D-erythritol 2,4-cyclodiphosphate (ME-CPP) with a corresponding release of cytidine 5-monophosphate (CMP). The polypeptide is 2-C-methyl-D-erythritol 2,4-cyclodiphosphate synthase (Geobacillus thermodenitrificans (strain NG80-2)).